A 310-amino-acid polypeptide reads, in one-letter code: p-hydroxybenzoic acid efflux pump subunit AaeA (310 aa).

The helical transmembrane segment at 12-32 (AITVVLVILAFIAIFNAWVYY) threads the bilayer.

Belongs to the membrane fusion protein (MFP) (TC 8.A.1) family.

The protein resides in the cell inner membrane. Its function is as follows. Forms an efflux pump with AaeB. In Escherichia coli O8 (strain IAI1), this protein is p-hydroxybenzoic acid efflux pump subunit AaeA.